A 289-amino-acid polypeptide reads, in one-letter code: Syntaxin-2 (289 aa).

Residues 1 to 265 are Cytoplasmic-facing; sequence MRDRLPDLTA…KYQSKARRKK (265 aa). A coiled-coil region spans residues 68–101; sequence EGKIKEELEDLDKEIKKTANRIRGKLKSIEQSCD. The t-SNARE coiled-coil homology domain occupies 192 to 254; that stretch reads LNEIESRHKD…EHAKEETKKA (63 aa). A helical; Anchor for type IV membrane protein transmembrane segment spans residues 266-289; it reads WIIAAVAVAVIAVLALIIGLSVGK.

The protein belongs to the syntaxin family. As to quaternary structure, interacts with SYT6 and SYT8; the interaction is Ca(2+)-dependent.

It is found in the membrane. In terms of biological role, essential for epithelial morphogenesis. May mediate Ca(2+)-regulation of exocytosis acrosomal reaction in sperm. The chain is Syntaxin-2 (Stx2) from Mus musculus (Mouse).